Consider the following 208-residue polypeptide: Urease accessory protein UreE (208 aa).

The interval 145–195 (AEAHGHGQAHAHDHHDHDHHDHGHDHAHHDHAHHDHAHDHHGHDHAHDHAH) is disordered.

The protein belongs to the UreE family.

It is found in the cytoplasm. Involved in urease metallocenter assembly. Binds nickel. Probably functions as a nickel donor during metallocenter assembly. In Azorhizobium caulinodans (strain ATCC 43989 / DSM 5975 / JCM 20966 / LMG 6465 / NBRC 14845 / NCIMB 13405 / ORS 571), this protein is Urease accessory protein UreE.